A 447-amino-acid chain; its full sequence is Phosphoglucosamine mutase (447 aa).

Residue Ser-102 is the Phosphoserine intermediate of the active site. 4 residues coordinate Mg(2+): Ser-102, Asp-241, Asp-243, and Asp-245. Ser-102 is subject to Phosphoserine.

Belongs to the phosphohexose mutase family. Requires Mg(2+) as cofactor. Activated by phosphorylation.

The enzyme catalyses alpha-D-glucosamine 1-phosphate = D-glucosamine 6-phosphate. In terms of biological role, catalyzes the conversion of glucosamine-6-phosphate to glucosamine-1-phosphate. The sequence is that of Phosphoglucosamine mutase from Pseudomonas savastanoi pv. phaseolicola (strain 1448A / Race 6) (Pseudomonas syringae pv. phaseolicola (strain 1448A / Race 6)).